The sequence spans 409 residues: Glutamate--tRNA ligase 2 (409 aa).

The 'HIGH' region motif lies at 9-19 (PSPTGNLHIGG). Residues 198 to 202 (KLSKR) carry the 'KMSKS' region motif. An ATP-binding site is contributed by Lys201.

Belongs to the class-I aminoacyl-tRNA synthetase family. Glutamate--tRNA ligase type 1 subfamily. In terms of assembly, monomer.

It is found in the cytoplasm. The enzyme catalyses tRNA(Glu) + L-glutamate + ATP = L-glutamyl-tRNA(Glu) + AMP + diphosphate. In terms of biological role, catalyzes the attachment of glutamate to tRNA(Glu) in a two-step reaction: glutamate is first activated by ATP to form Glu-AMP and then transferred to the acceptor end of tRNA(Glu). This Neorickettsia sennetsu (strain ATCC VR-367 / Miyayama) (Ehrlichia sennetsu) protein is Glutamate--tRNA ligase 2.